The primary structure comprises 659 residues: MPSSLTKTESNSDPRTNIQQVPKALDKNVTNSGNLDSTSSSTGSITEDEKRSEPNADSNNMTGGEPIDPRDLDWDGPDDPDNPHNWSSLKKWYTTMTSAFLCLVVTMGSSLYVSSVPELVERYHVSQTLALAGLTFYLLGLSTVIGAPLSEVFGRKPVYLFSLPVSMLFTMGVGLSNGHMRIILPLRFLSGVFASPALSVGSGTILDIFDVDQVSVAMTYFVLSPFLGPVLSPIMAGFATEAKGWRWSEWIQLIAGGLILPFIALMPETHKGIILRKRAKKRNIALKKFSREAQKEFLKTTVTITILRPLKMLVVEPIVFVFSVYVAFIFAILFGFFEAYAVIYRGVYHMSMGISGLPFIGIGVGLWIGAFFYLYIDRKYLFPKPPAGTQPLTEKERTSKRTTPYRGARDAETGELLPVVPEKFLIACKFGSVALPIGLFWQAWTARSDVHWMAPVAAGVPFGFGLILIFFSVLMYFSTCYPPLTVASCLAANNLLRYVMSSVFPLFTIQMYTKMKIKWASTLFALVCVVMIPIPWVFEKWGSKLRHKSQFGYAAMEKEAETEGGIDDVNAVDGELNLTRMTTLRTMETDPSTREKPGERLSLRRTHTQPVPASFDREDGQHAQNRNEPISNSLYSAIKDNEDGYSYTEMATDASARMV.

Composition is skewed to polar residues over residues 1–20 and 28–45; these read MPSSLTKTESNSDPRTNIQQ and NVTNSGNLDSTSSSTGSI. A disordered region spans residues 1–81; that stretch reads MPSSLTKTES…LDWDGPDDPD (81 aa). Residues 1–99 lie on the Cytoplasmic side of the membrane; it reads MPSSLTKTES…KKWYTTMTSA (99 aa). A helical membrane pass occupies residues 100–120; the sequence is FLCLVVTMGSSLYVSSVPELV. The Extracellular segment spans residues 121-128; sequence ERYHVSQT. A helical membrane pass occupies residues 129–149; sequence LALAGLTFYLLGLSTVIGAPL. At 150 to 157 the chain is on the cytoplasmic side; the sequence is SEVFGRKP. Residues 158–178 form a helical membrane-spanning segment; that stretch reads VYLFSLPVSMLFTMGVGLSNG. Topologically, residues 179–187 are extracellular; that stretch reads HMRIILPLR. Residues 188-208 form a helical membrane-spanning segment; that stretch reads FLSGVFASPALSVGSGTILDI. Residues 209–215 lie on the Cytoplasmic side of the membrane; the sequence is FDVDQVS. The helical transmembrane segment at 216–236 threads the bilayer; that stretch reads VAMTYFVLSPFLGPVLSPIMA. The Extracellular portion of the chain corresponds to 237–246; the sequence is GFATEAKGWR. A helical transmembrane segment spans residues 247–267; the sequence is WSEWIQLIAGGLILPFIALMP. Residues 268–316 lie on the Cytoplasmic side of the membrane; the sequence is ETHKGIILRKRAKKRNIALKKFSREAQKEFLKTTVTITILRPLKMLVVE. A helical transmembrane segment spans residues 317–337; that stretch reads PIVFVFSVYVAFIFAILFGFF. The Extracellular segment spans residues 338–355; it reads EAYAVIYRGVYHMSMGIS. The helical transmembrane segment at 356-376 threads the bilayer; it reads GLPFIGIGVGLWIGAFFYLYI. Residues 377 to 423 are Cytoplasmic-facing; the sequence is DRKYLFPKPPAGTQPLTEKERTSKRTTPYRGARDAETGELLPVVPEK. The segment at 387–408 is disordered; that stretch reads AGTQPLTEKERTSKRTTPYRGA. The chain crosses the membrane as a helical span at residues 424-444; the sequence is FLIACKFGSVALPIGLFWQAW. The Extracellular segment spans residues 445-456; the sequence is TARSDVHWMAPV. A helical membrane pass occupies residues 457 to 477; that stretch reads AAGVPFGFGLILIFFSVLMYF. The Cytoplasmic segment spans residues 478–486; the sequence is STCYPPLTV. A helical transmembrane segment spans residues 487–509; sequence ASCLAANNLLRYVMSSVFPLFTI. Topologically, residues 510-518 are extracellular; it reads QMYTKMKIK. The helical transmembrane segment at 519-539 threads the bilayer; that stretch reads WASTLFALVCVVMIPIPWVFE. Residues 540-659 are Cytoplasmic-facing; that stretch reads KWGSKLRHKS…MATDASARMV (120 aa). Residues 587–602 show a composition bias toward basic and acidic residues; the sequence is METDPSTREKPGERLS. The segment at 587–631 is disordered; it reads METDPSTREKPGERLSLRRTHTQPVPASFDREDGQHAQNRNEPIS. Residues Thr589, Thr606, and Thr608 each carry the phosphothreonine modification. The segment covering 622 to 631 has biased composition (polar residues); the sequence is HAQNRNEPIS. A phosphoserine mark is found at Ser633 and Ser646.

The protein belongs to the major facilitator superfamily. DHA1 family. Polyamines/proton antiporter (TC 2.A.1.2.16) subfamily.

The protein resides in the cell membrane. In terms of biological role, cell membrane polyamine/proton antiporter, involved in the detoxification of excess polyamines in the cytoplasm. Recognizes spermidine, spermine and the antimalarial drug quinidine, but not quinine, chloroquine and mefloquine. The chain is Polyamine transporter 4 (TPO4) from Saccharomyces cerevisiae (strain ATCC 204508 / S288c) (Baker's yeast).